We begin with the raw amino-acid sequence, 137 residues long: Nucleoside diphosphate kinase (137 aa).

Residues K9, F57, R85, T91, R102, and N112 each coordinate ATP. The active-site Pros-phosphohistidine intermediate is H115.

It belongs to the NDK family. In terms of assembly, homotetramer. The cofactor is Mg(2+).

It is found in the cytoplasm. It catalyses the reaction a 2'-deoxyribonucleoside 5'-diphosphate + ATP = a 2'-deoxyribonucleoside 5'-triphosphate + ADP. It carries out the reaction a ribonucleoside 5'-diphosphate + ATP = a ribonucleoside 5'-triphosphate + ADP. Functionally, major role in the synthesis of nucleoside triphosphates other than ATP. The ATP gamma phosphate is transferred to the NDP beta phosphate via a ping-pong mechanism, using a phosphorylated active-site intermediate. This is Nucleoside diphosphate kinase from Campylobacter lari (strain RM2100 / D67 / ATCC BAA-1060).